The chain runs to 200 residues: Lipopolysaccharide core heptose(II)-phosphate phosphatase (200 aa).

Residues methionine 1–alanine 25 form the signal peptide.

This sequence belongs to the phosphoglycerate mutase family. Ais subfamily.

The protein localises to the periplasm. Its pathway is bacterial outer membrane biogenesis; lipopolysaccharide metabolism. In terms of biological role, catalyzes the dephosphorylation of heptose(II) of the outer membrane lipopolysaccharide core. The chain is Lipopolysaccharide core heptose(II)-phosphate phosphatase from Escherichia coli O9:H4 (strain HS).